Consider the following 664-residue polypeptide: Lysophospholipase 1 (664 aa).

Residues 1–22 (MKLQSLLVSAAVLTSLTENVNA) form the signal peptide. N-linked (GlcNAc...) asparagine glycosylation is found at asparagine 26, asparagine 33, asparagine 52, asparagine 78, asparagine 92, asparagine 123, asparagine 160, asparagine 170, asparagine 215, asparagine 277, asparagine 307, asparagine 345, asparagine 388, asparagine 459, asparagine 489, asparagine 513, asparagine 541, asparagine 565, and asparagine 582. One can recognise a PLA2c domain in the interval 35 to 586 (TCDDDINLVR…TNYCWNGTID (552 aa)). Residue asparagine 634 is the site of GPI-anchor amidated asparagine attachment. The propeptide at 635–664 (AGNALVNYSNLNTNTFIGVLSVISAVFGLI) is removed in mature form.

It belongs to the lysophospholipase family.

Its subcellular location is the cell membrane. The catalysed reaction is a 1-acyl-sn-glycero-3-phosphocholine + H2O = sn-glycerol 3-phosphocholine + a fatty acid + H(+). It catalyses the reaction a 1-acyl-sn-glycero-3-phospho-(1D-myo-inositol) + H2O = sn-glycero-3-phospho-1D-myo-inositol + a fatty acid + H(+). The enzyme catalyses a 1-acyl-sn-glycero-3-phospho-L-serine + H2O = sn-glycero-3-phospho-L-serine + a fatty acid + H(+). It carries out the reaction a 1,2-diacyl-sn-glycero-3-phospho-(1D-myo-inositol) + 2 H2O = sn-glycero-3-phospho-1D-myo-inositol + 2 a carboxylate + 2 H(+). The catalysed reaction is a 1,2-diacyl-sn-glycero-3-phospho-L-serine + 2 H2O = sn-glycero-3-phospho-L-serine + 2 a carboxylate + 2 H(+). It catalyses the reaction 2 1-hexadecanoyl-sn-glycero-3-phosphocholine = 1,2-dihexadecanoyl-sn-glycero-3-phosphocholine + sn-glycerol 3-phosphocholine. The enzyme catalyses 1-hexadecanoyl-sn-glycero-3-phosphocholine + H2O = sn-glycerol 3-phosphocholine + hexadecanoate + H(+). It carries out the reaction 1,2-dihexadecanoyl-sn-glycero-3-phosphocholine + H2O = 1-hexadecanoyl-sn-glycero-3-phosphocholine + hexadecanoate + H(+). Functionally, sequentially removes both fatty acyl groups from diacylglycerophospholipids and therefore has both phospholipase B and lysophospholipase activities. It also displays transacylase activity. Substrate preference is phosphatidylserine &gt; phosphatidylinositol &gt;&gt; phosphatidylcholine &gt; phosphatidylethanolamine. The substrate specificity is pH- and ion-dependent. In contrast with activities observed at optimum pH 3.5, the order of substrate preference at pH 5.5 is phosphatidylcholine = phosphatidylethanolamine &gt;&gt; phosphatidylinositol. Degrades predominantly phosphatidylcholine and to some extent phosphatidylinositol in vivo. The chain is Lysophospholipase 1 from Saccharomyces cerevisiae (strain ATCC 204508 / S288c) (Baker's yeast).